A 236-amino-acid polypeptide reads, in one-letter code: Small ribosomal subunit protein uS3 (236 aa).

A KH type-2 domain is found at 39-107 (IREFLTEELK…DTSLNIVEVR (69 aa)). The tract at residues 214-236 (ASERRAVEGDNQGSSSNRRRENA) is disordered.

It belongs to the universal ribosomal protein uS3 family. In terms of assembly, part of the 30S ribosomal subunit. Forms a tight complex with proteins S10 and S14.

In terms of biological role, binds the lower part of the 30S subunit head. Binds mRNA in the 70S ribosome, positioning it for translation. This chain is Small ribosomal subunit protein uS3, found in Brucella canis (strain ATCC 23365 / NCTC 10854 / RM-666).